A 227-amino-acid polypeptide reads, in one-letter code: MAYPFQLGLQDATSPIMEELMNFHDHTLMIVFLISSLVLYIISLMLTTKLTHTSTMDAQEVETIWTILPAAILILIALPSLRILYMMDEINNPVLTVKTMGHQWYWSYEYTDYEDLCFDSYMIPTNDLKPGELRLLEVDNRVVLPMELPIRMLISSEDVLHSWAVPSLGLKTDAIPGRLNQATVTSNRPGLFYGQCSEICGSNHSFMPIVLEMVPLKYFENWSASMI.

Residues 1–14 (MAYPFQLGLQDATS) are Mitochondrial intermembrane-facing. A helical transmembrane segment spans residues 15–45 (PIMEELMNFHDHTLMIVFLISSLVLYIISLM). Topologically, residues 46–59 (LTTKLTHTSTMDAQ) are mitochondrial matrix. The chain crosses the membrane as a helical span at residues 60 to 87 (EVETIWTILPAAILILIALPSLRILYMM). Residues 88-227 (DEINNPVLTV…YFENWSASMI (140 aa)) are Mitochondrial intermembrane-facing. 6 residues coordinate Cu cation: H161, C196, E198, C200, H204, and M207. Residue E198 participates in Mg(2+) binding. The residue at position 218 (Y218) is a Phosphotyrosine.

The protein belongs to the cytochrome c oxidase subunit 2 family. Component of the cytochrome c oxidase (complex IV, CIV), a multisubunit enzyme composed of 14 subunits. The complex is composed of a catalytic core of 3 subunits MT-CO1, MT-CO2 and MT-CO3, encoded in the mitochondrial DNA, and 11 supernumerary subunits COX4I, COX5A, COX5B, COX6A, COX6B, COX6C, COX7A, COX7B, COX7C, COX8 and NDUFA4, which are encoded in the nuclear genome. The complex exists as a monomer or a dimer and forms supercomplexes (SCs) in the inner mitochondrial membrane with NADH-ubiquinone oxidoreductase (complex I, CI) and ubiquinol-cytochrome c oxidoreductase (cytochrome b-c1 complex, complex III, CIII), resulting in different assemblies (supercomplex SCI(1)III(2)IV(1) and megacomplex MCI(2)III(2)IV(2)). Found in a complex with TMEM177, COA6, COX18, COX20, SCO1 and SCO2. Interacts with TMEM177 in a COX20-dependent manner. Interacts with COX20. Interacts with COX16. Requires Cu cation as cofactor.

It is found in the mitochondrion inner membrane. The catalysed reaction is 4 Fe(II)-[cytochrome c] + O2 + 8 H(+)(in) = 4 Fe(III)-[cytochrome c] + 2 H2O + 4 H(+)(out). Component of the cytochrome c oxidase, the last enzyme in the mitochondrial electron transport chain which drives oxidative phosphorylation. The respiratory chain contains 3 multisubunit complexes succinate dehydrogenase (complex II, CII), ubiquinol-cytochrome c oxidoreductase (cytochrome b-c1 complex, complex III, CIII) and cytochrome c oxidase (complex IV, CIV), that cooperate to transfer electrons derived from NADH and succinate to molecular oxygen, creating an electrochemical gradient over the inner membrane that drives transmembrane transport and the ATP synthase. Cytochrome c oxidase is the component of the respiratory chain that catalyzes the reduction of oxygen to water. Electrons originating from reduced cytochrome c in the intermembrane space (IMS) are transferred via the dinuclear copper A center (CU(A)) of subunit 2 and heme A of subunit 1 to the active site in subunit 1, a binuclear center (BNC) formed by heme A3 and copper B (CU(B)). The BNC reduces molecular oxygen to 2 water molecules using 4 electrons from cytochrome c in the IMS and 4 protons from the mitochondrial matrix. The chain is Cytochrome c oxidase subunit 2 (MT-CO2) from Praomys tullbergi (Tullberg's soft-furred rat).